The sequence spans 469 residues: MKHIRTRFAPSPTGYLHIGGVRTALFSWLFARQNNGAFILRIEDTDVARSTQASVDAILEGLRWLQIDWNEGPYYQSQRMDRYREVIEQLVKSDDAYRCYCSKERLIELRNTQLKNKQKPRYDGFCRDKAPRQSNEPFVIRFRNPVEGAVVFDDLIRGTISIDNRELDDLIIARSDGGPTYNLTVVVDDWDMKITHVIRGDDHINNTPRQINILHALGAELPHYGHVPMILGPDGKRLSKRHGAVSVLQYRDEGYLPEALMNYLIRLGWAHGDQEIFSREEMVQLFDISAVSRSPAAFNPEKLLWLNQHYLKTVSPTIIAKAFATQLEKAGTDLRNGPSLEQVIALQAERTKTLKEMAQRSFYFYQEVRSYDEKAARKHLLATIVEPLQRVRERLASLPSWEKEAIHEVIVETAQLHQLKLGQLAQPIRVALTGDTVSPPIDATLYLIGRDSALKRLDHAIRFIHQGMG.

The 'HIGH' region signature appears at proline 10–glycine 20. Residues cysteine 99, cysteine 101, cysteine 126, and aspartate 128 each contribute to the Zn(2+) site. A 'KMSKS' region motif is present at residues arginine 237–arginine 241. An ATP-binding site is contributed by lysine 240.

It belongs to the class-I aminoacyl-tRNA synthetase family. Glutamate--tRNA ligase type 1 subfamily. Monomer. The cofactor is Zn(2+).

The protein localises to the cytoplasm. It carries out the reaction tRNA(Glu) + L-glutamate + ATP = L-glutamyl-tRNA(Glu) + AMP + diphosphate. Catalyzes the attachment of glutamate to tRNA(Glu) in a two-step reaction: glutamate is first activated by ATP to form Glu-AMP and then transferred to the acceptor end of tRNA(Glu). The protein is Glutamate--tRNA ligase 1 of Coxiella burnetii (strain CbuK_Q154) (Coxiella burnetii (strain Q154)).